The sequence spans 276 residues: NAD-capped RNA hydrolase NudC (276 aa).

Residue Arg82 participates in substrate binding. Positions 112 and 115 each coordinate Zn(2+). Glu125 contacts substrate. The Zn(2+) site is built by Cys130 and Cys133. Tyr138 provides a ligand contact to substrate. The Nudix hydrolase domain maps to 139–262 (PRLSPSMIVL…SIARYLIELY (124 aa)). 3 residues coordinate a divalent metal cation: Ala172, Glu188, and Glu192. Positions 173–194 (GYVEPGESVEQCVAREVREEVG) match the Nudix box motif. 206-213 (QGWPFPHS) provides a ligand contact to substrate. Position 233 (Glu233) interacts with a divalent metal cation. A substrate-binding site is contributed by Ala255.

Belongs to the Nudix hydrolase family. NudC subfamily. As to quaternary structure, homodimer. Mg(2+) serves as cofactor. Mn(2+) is required as a cofactor. It depends on Zn(2+) as a cofactor.

It catalyses the reaction a 5'-end NAD(+)-phospho-ribonucleoside in mRNA + H2O = a 5'-end phospho-adenosine-phospho-ribonucleoside in mRNA + beta-nicotinamide D-ribonucleotide + 2 H(+). The enzyme catalyses NAD(+) + H2O = beta-nicotinamide D-ribonucleotide + AMP + 2 H(+). It carries out the reaction NADH + H2O = reduced beta-nicotinamide D-ribonucleotide + AMP + 2 H(+). MRNA decapping enzyme that specifically removes the nicotinamide adenine dinucleotide (NAD) cap from a subset of mRNAs by hydrolyzing the diphosphate linkage to produce nicotinamide mononucleotide (NMN) and 5' monophosphate mRNA. The NAD-cap is present at the 5'-end of some mRNAs and stabilizes RNA against 5'-processing. Has preference for mRNAs with a 5'-end purine. Catalyzes the hydrolysis of a broad range of dinucleotide pyrophosphates. The protein is NAD-capped RNA hydrolase NudC of Stutzerimonas stutzeri (strain A1501) (Pseudomonas stutzeri).